Here is a 338-residue protein sequence, read N- to C-terminus: Methionine synthase (338 aa).

Zn(2+) contacts are provided by histidine 210, cysteine 212, glutamate 234, and cysteine 294.

This sequence belongs to the archaeal MetE family. It depends on Zn(2+) as a cofactor.

The protein operates within amino-acid biosynthesis; L-methionine biosynthesis via de novo pathway. In terms of biological role, catalyzes the transfer of a methyl group to L-homocysteine resulting in methionine formation. The physiological methyl donor is unknown. The chain is Methionine synthase from Pyrococcus horikoshii (strain ATCC 700860 / DSM 12428 / JCM 9974 / NBRC 100139 / OT-3).